An 857-amino-acid polypeptide reads, in one-letter code: Leucine--tRNA ligase (857 aa).

The short motif at 42 to 52 is the 'HIGH' region element; the sequence is PYPSGRLHMGH. Residues 617 to 621 carry the 'KMSKS' region motif; that stretch reads KMSKS. An ATP-binding site is contributed by Lys-620.

It belongs to the class-I aminoacyl-tRNA synthetase family.

It localises to the cytoplasm. It carries out the reaction tRNA(Leu) + L-leucine + ATP = L-leucyl-tRNA(Leu) + AMP + diphosphate. The protein is Leucine--tRNA ligase of Vibrio vulnificus (strain CMCP6).